Consider the following 209-residue polypeptide: MKIVTTDSENKAVLYKVASEVEIPLTKTTKEKIEAMRIFYKSFQGKAGFAVPQVGLSERIILVEQHLFDTTMAEETDEPTILVNPSWRPISDKKEWDIEGCLSVPGKVGVVERYVHVELTAWLYHSDTEALSKIKREYHREYSSVLWQHEIDHLEGKIYVDKAKLLLNEKDFYSFRQQLIESGKIQSGMALFDLGPLIYDIVVKGEIPS.

Residues cysteine 101 and histidine 149 each coordinate Fe cation. Glutamate 150 is an active-site residue. Residue histidine 153 participates in Fe cation binding.

This sequence belongs to the polypeptide deformylase family. The cofactor is Fe(2+).

The catalysed reaction is N-terminal N-formyl-L-methionyl-[peptide] + H2O = N-terminal L-methionyl-[peptide] + formate. Its function is as follows. Removes the formyl group from the N-terminal Met of newly synthesized proteins. Requires at least a dipeptide for an efficient rate of reaction. N-terminal L-methionine is a prerequisite for activity but the enzyme has broad specificity at other positions. This Coxiella burnetii (strain RSA 493 / Nine Mile phase I) protein is Peptide deformylase 2.